The sequence spans 151 residues: Acidic phospholipase A2 1 (151 aa).

An N-terminal signal peptide occupies residues 1-27 (MYPAHLLVLLAVCVSLLGAASIPARPL). 7 cysteine pairs are disulfide-bonded: Cys-38–Cys-104, Cys-54–Cys-151, Cys-56–Cys-72, Cys-71–Cys-132, Cys-78–Cys-125, Cys-88–Cys-118, and Cys-111–Cys-123. 3 residues coordinate Ca(2+): Tyr-55, Gly-57, and Gly-59. The active site involves His-75. Asp-76 serves as a coordination point for Ca(2+). The active site involves Asp-126.

The protein belongs to the phospholipase A2 family. Group I subfamily. D49 sub-subfamily. It depends on Ca(2+) as a cofactor. In terms of tissue distribution, expressed by the venom gland.

It is found in the secreted. The catalysed reaction is a 1,2-diacyl-sn-glycero-3-phosphocholine + H2O = a 1-acyl-sn-glycero-3-phosphocholine + a fatty acid + H(+). In terms of biological role, PLA2 catalyzes the calcium-dependent hydrolysis of the 2-acyl groups in 3-sn-phosphoglycerides. This Tropidechis carinatus (Australian rough-scaled snake) protein is Acidic phospholipase A2 1.